The chain runs to 689 residues: DNA topoisomerase 1 (689 aa).

Positions 3-113 constitute a Toprim domain; sequence DNLVIVESPA…KENRVVFNEI (111 aa). Mg(2+) contacts are provided by Glu9 and Asp82. One can recognise a Topo IA-type catalytic domain in the interval 129–557; the sequence is EMNLVDAQQA…FFSSFKQDVE (429 aa). An interaction with DNA region spans residues 163-168; that stretch reads SAGRVQ. Tyr298 functions as the O-(5'-phospho-DNA)-tyrosine intermediate in the catalytic mechanism. The interval 328-356 is disordered; sequence SKRKASGKQGDQDAHEAIRPSSTMRTPDD. C4-type zinc fingers lie at residues 577 to 603, 617 to 645, and 658 to 681; these read CEICGSPMVIKMGRYGKFMACSNFPDC, CPKCNDGDVVERKSKKNRVFYGCSKYPEC, and CPKCNQYLVENKKGKTTQVICSNC.

It belongs to the type IA topoisomerase family. In terms of assembly, monomer. Mg(2+) serves as cofactor.

The catalysed reaction is ATP-independent breakage of single-stranded DNA, followed by passage and rejoining.. Functionally, releases the supercoiling and torsional tension of DNA, which is introduced during the DNA replication and transcription, by transiently cleaving and rejoining one strand of the DNA duplex. Introduces a single-strand break via transesterification at a target site in duplex DNA. The scissile phosphodiester is attacked by the catalytic tyrosine of the enzyme, resulting in the formation of a DNA-(5'-phosphotyrosyl)-enzyme intermediate and the expulsion of a 3'-OH DNA strand. The free DNA strand then undergoes passage around the unbroken strand, thus removing DNA supercoils. Finally, in the religation step, the DNA 3'-OH attacks the covalent intermediate to expel the active-site tyrosine and restore the DNA phosphodiester backbone. The protein is DNA topoisomerase 1 of Staphylococcus aureus (strain USA300).